We begin with the raw amino-acid sequence, 611 residues long: Phosphatidylinositol 3,4,5-trisphosphate 3-phosphatase and protein-tyrosine-phosphatase PTEN2A (611 aa).

2 disordered regions span residues 1 to 42 (MSSE…GVAS) and 87 to 109 (GIRL…SSAT). The residue at position 91 (Ser91) is a Phosphoserine. Residues 100-109 (TTTEGTSSAT) are compositionally biased toward low complexity. The Phosphatase tensin-type domain maps to 145–324 (RRYQEGGFDL…KYFERILTYF (180 aa)). Residue Cys263 is the Phosphocysteine intermediate of the active site. A C2 tensin-type domain is found at 331 to 458 (GRRCMLRGFR…FMVEVVLADI (128 aa)). Residues 462 to 486 (IPTNPSSETASKTPEETSAANSSPV) are compositionally biased toward polar residues. The interval 462–589 (IPTNPSSETA…VNASSSSESE (128 aa)) is disordered. The span at 495 to 507 (PDKETENPDKDDV) shows a compositional bias: basic and acidic residues. Ser509 carries the post-translational modification Phosphoserine. Polar residues-rich tracts occupy residues 514–530 (DSTG…SQTP) and 549–565 (VSIS…QGVT).

The protein belongs to the PTEN phosphatase protein family. Expressed in seedlings, roots, stems, leaves, flowers and siliques. However, at protein level, not observed in older leaves and mature siliques.

It catalyses the reaction O-phospho-L-tyrosyl-[protein] + H2O = L-tyrosyl-[protein] + phosphate. It carries out the reaction a 1,2-diacyl-sn-glycero-3-phospho-(1D-myo-inositol-3,4,5-trisphosphate) + H2O = a 1,2-diacyl-sn-glycero-3-phospho-(1D-myo-inositol-4,5-bisphosphate) + phosphate. Binds phosphatidic acid. Protein tyrosine phosphatase that also exhibits lipid phosphatase activity. Hydrolyzed poorly p-nitrophenyl phosphate (p-NPP). Can use PtdIns isomers as substrates. Removes efficiently phosphate from the D3 position of the inositol ring, less from the D4 position and not at all from the D5 position on monophosphorylated PtdIns isomers (PIPs). The presence of a phosphate group in the D5 position on PIP(2) isomers reduces lipid phosphatase activity. Mostly active on PtdIns(3)P and PtdIns(3,4)P(2), to a lower extent, on PtdIns(4)P and PtdIns(3,5)P(2), but barely against PtdIns(3,4,5)P(3) as substrate. This Arabidopsis thaliana (Mouse-ear cress) protein is Phosphatidylinositol 3,4,5-trisphosphate 3-phosphatase and protein-tyrosine-phosphatase PTEN2A.